Consider the following 448-residue polypeptide: Phosphoglucosamine mutase (448 aa).

Serine 101 serves as the catalytic Phosphoserine intermediate. Serine 101, aspartate 242, aspartate 244, and aspartate 246 together coordinate Mg(2+). Phosphoserine is present on serine 101.

It belongs to the phosphohexose mutase family. The cofactor is Mg(2+). Activated by phosphorylation.

It catalyses the reaction alpha-D-glucosamine 1-phosphate = D-glucosamine 6-phosphate. Its function is as follows. Catalyzes the conversion of glucosamine-6-phosphate to glucosamine-1-phosphate. This chain is Phosphoglucosamine mutase, found in Afipia carboxidovorans (strain ATCC 49405 / DSM 1227 / KCTC 32145 / OM5) (Oligotropha carboxidovorans).